Reading from the N-terminus, the 710-residue chain is Homeobox-leucine zipper protein ROC8 (710 aa).

The tract at residues 1 to 23 (MDFGDEPEGSDSQRRRKRYHRHT) is disordered. The span at 14-23 (RRRKRYHRHT) shows a compositional bias: basic residues. A DNA-binding region (homeobox) is located at residues 15 to 74 (RRKRYHRHTPRQIQQLEAMFKECPHPDENQRAQLSRELGLEPRQIKFWFQNRRTQMKAQH). Residues 82–144 (LRAENDKIRC…DRVSNLTSKY (63 aa)) adopt a coiled-coil conformation. The START domain occupies 197–440 (SDMERPMMAE…LQRACERYAS (244 aa)). Low complexity predominate over residues 630–648 (RPGSAAGASTSSAGPLAAA). Residues 630-650 (RPGSAAGASTSSAGPLAAARG) are disordered.

Belongs to the HD-ZIP homeobox family. Class IV subfamily.

The protein localises to the nucleus. Probable transcription factor. This Oryza sativa subsp. japonica (Rice) protein is Homeobox-leucine zipper protein ROC8 (ROC8).